We begin with the raw amino-acid sequence, 393 residues long: UDP-N-acetylglucosamine--N-acetylmuramyl-(pentapeptide) pyrophosphoryl-undecaprenol N-acetylglucosamine transferase (393 aa).

UDP-N-acetyl-alpha-D-glucosamine-binding positions include 15 to 17 (TAG), Asn129, Arg171, Ser211, and Gln322.

It belongs to the glycosyltransferase 28 family. MurG subfamily.

Its subcellular location is the cell membrane. The catalysed reaction is di-trans,octa-cis-undecaprenyl diphospho-N-acetyl-alpha-D-muramoyl-L-alanyl-D-glutamyl-meso-2,6-diaminopimeloyl-D-alanyl-D-alanine + UDP-N-acetyl-alpha-D-glucosamine = di-trans,octa-cis-undecaprenyl diphospho-[N-acetyl-alpha-D-glucosaminyl-(1-&gt;4)]-N-acetyl-alpha-D-muramoyl-L-alanyl-D-glutamyl-meso-2,6-diaminopimeloyl-D-alanyl-D-alanine + UDP + H(+). The protein operates within cell wall biogenesis; peptidoglycan biosynthesis. In terms of biological role, cell wall formation. Catalyzes the transfer of a GlcNAc subunit on undecaprenyl-pyrophosphoryl-MurNAc-pentapeptide (lipid intermediate I) to form undecaprenyl-pyrophosphoryl-MurNAc-(pentapeptide)GlcNAc (lipid intermediate II). The polypeptide is UDP-N-acetylglucosamine--N-acetylmuramyl-(pentapeptide) pyrophosphoryl-undecaprenol N-acetylglucosamine transferase (Bifidobacterium longum (strain DJO10A)).